Consider the following 188-residue polypeptide: Elongation factor P (188 aa).

N6-(3,6-diaminohexanoyl)-5-hydroxylysine is present on K34.

This sequence belongs to the elongation factor P family. In terms of processing, may be beta-lysylated on the epsilon-amino group of Lys-34 by the combined action of EpmA and EpmB, and then hydroxylated on the C5 position of the same residue by EpmC (if this protein is present). Lysylation is critical for the stimulatory effect of EF-P on peptide-bond formation. The lysylation moiety may extend toward the peptidyltransferase center and stabilize the terminal 3-CCA end of the tRNA. Hydroxylation of the C5 position on Lys-34 may allow additional potential stabilizing hydrogen-bond interactions with the P-tRNA.

The protein localises to the cytoplasm. The protein operates within protein biosynthesis; polypeptide chain elongation. Functionally, involved in peptide bond synthesis. Alleviates ribosome stalling that occurs when 3 or more consecutive Pro residues or the sequence PPG is present in a protein, possibly by augmenting the peptidyl transferase activity of the ribosome. Modification of Lys-34 is required for alleviation. This Citrobacter koseri (strain ATCC BAA-895 / CDC 4225-83 / SGSC4696) protein is Elongation factor P.